Reading from the N-terminus, the 311-residue chain is Zeta-sarcoglycan (311 aa).

Residues 1 to 50 lie on the Cytoplasmic side of the membrane; the sequence is MDRSTDLDIQELKMTREQYILATQQNNLPRPENAQLYPVGIYGWRKRCLY. The chain crosses the membrane as a helical; Signal-anchor for type II membrane protein span at residues 51–71; sequence FFVLLLLVTMIVNLAMTIWIL. At 72 to 311 the chain is on the extracellular side; it reads KVMNFTVDGM…QSSSSICLWN (240 aa). Asn-75 and Asn-123 each carry an N-linked (GlcNAc...) asparagine glycan. A disulfide bridge links Cys-285 with Cys-301.

The protein belongs to the sarcoglycan beta/delta/gamma/zeta family. In terms of tissue distribution, expressed in the heart, skeletal muscle and arterial vascular smooth muscle.

The protein resides in the cell membrane. It localises to the sarcolemma. Its subcellular location is the cytoplasm. The protein localises to the cytoskeleton. Functionally, component of the sarcoglycan complex, a subcomplex of the dystrophin-glycoprotein complex which forms a link between the F-actin cytoskeleton and the extracellular matrix. May play a role in the maintenance of striated muscle membrane stability. This Mus musculus (Mouse) protein is Zeta-sarcoglycan (Sgcz).